The primary structure comprises 272 residues: MTGSQEDQPKIIIDQEQPKTLETEHQPEPSSSSPDQKKWGTHVMGAPAAPVAHPDNQQAAAWVAGDNQQTQYQPYVIYSPVEHPTTNNPLEPVIGMFHTWSRKAETVARNLWHNLKTGPSMSETAWGKVNLTAKAITKGGFESLFRQIFGTEPNETLKKTFACYLSTTTGPVAGTVYLSNARVAFCSDRPLYFTAPSGQESWSYYRVVVPLANVATVNPVVVKETPPEKYIQLTTVDGHDFWFMGFVNYEKATHHLLTSVSDFQTAHGSVSG.

The disordered stretch occupies residues 1 to 42 (MTGSQEDQPKIIIDQEQPKTLETEHQPEPSSSSPDQKKWGTH). Positions 16-27 (EQPKTLETEHQP) are enriched in basic and acidic residues. One can recognise a GRAM domain in the interval 143-221 (SLFRQIFGTE…ANVATVNPVV (79 aa)).

It belongs to the GEM family.

The protein is GEM-like protein 5 of Arabidopsis thaliana (Mouse-ear cress).